The sequence spans 654 residues: Spindle assembly abnormal protein 6 homolog (654 aa).

A PISA domain is found at valine 39–leucine 91. Positions threonine 175 to isoleucine 471 form a coiled coil. Serine 509 is modified (phosphoserine). Residues alanine 568–glycine 589 are disordered. Serine 612 carries the phosphoserine modification. The span at serine 634 to serine 644 shows a compositional bias: low complexity. Residues serine 634 to serine 654 form a disordered region. A Phosphoserine modification is found at serine 654.

As to quaternary structure, nine homodimers form a cartwheel structure with an internal diameter of 23 nm and radial spokes connecting to the microtubule triplets. Forms a complex with CPAP and STIL. Interacts with FBXW5. Interacts with NUP62 and TUBG1 at the centrosome. Interacts with CENATAC; the interaction increases with CENATAC acetylation. Interacts with FZR1; the interaction is regulated by CENATAC and leads to SASS6 proteasomal degradation. In terms of processing, ubiquitinated by the SCF(FBXW5) E3 ubiquitin-protein ligase complex during S phase, leading to its degradation and preventing centriole reduplication. Ubiquitinated by the anaphase promoting complex/cyclosome (APC/C) E3 ubiquitin-protein ligase complex, leading to its degradation and preventing centriole reduplication.

The protein localises to the cytoplasm. It localises to the cytoskeleton. Its subcellular location is the microtubule organizing center. The protein resides in the centrosome. It is found in the centriole. In terms of biological role, central scaffolding component of the centrioles ensuring their 9-fold symmetry. Required for centrosome biogenesis and duplication. Required both for mother-centriole-dependent centriole duplication and deuterosome-dependent centriole amplification in multiciliated cells. Not required for centriole formation in embryonic stem cells but necessary to maintain centriole architecture. Required for the recruitment of STIL to the procentriole and for STIL-mediated centriole amplification. The chain is Spindle assembly abnormal protein 6 homolog from Mus musculus (Mouse).